A 663-amino-acid chain; its full sequence is Beta-galactosidase YesZ (663 aa).

Residue arginine 106 participates in substrate binding. Cysteine 110 lines the Zn(2+) pocket. Asparagine 144 contributes to the substrate binding site. Glutamate 145 acts as the Proton donor in catalysis. Zn(2+) contacts are provided by cysteine 153, cysteine 155, and cysteine 158. Glutamate 296 functions as the Nucleophile in the catalytic mechanism. A substrate-binding site is contributed by 345–348 (EISH).

It belongs to the glycosyl hydrolase 42 family. As to quaternary structure, homotrimer.

It catalyses the reaction Hydrolysis of terminal non-reducing beta-D-galactose residues in beta-D-galactosides.. Functionally, may play a role in the degradation of rhamnogalacturonan derived from plant cell walls. The sequence is that of Beta-galactosidase YesZ (yesZ) from Bacillus subtilis (strain 168).